Consider the following 393-residue polypeptide: DNA polymerase processivity factor (393 aa).

Disordered stretches follow at residues 25–50 (EMER…REPP), 311–339 (ESRF…ALAS), and 355–393 (KNGT…RCVV). The segment covering 31 to 41 (RDHHRDHRDHR) has biased composition (basic residues). Over residues 311–333 (ESRFERMGKQDDGKGDRSHKNDD) the composition is skewed to basic and acidic residues.

It belongs to the herpesviridae polymerase accessory protein family.

Its function is as follows. Accessory subunit of the DNA polymerase that acts to increase the processivity of polymerization. In Human herpesvirus 6A (strain Uganda-1102) (HHV-6 variant A), this protein is DNA polymerase processivity factor (U27).